The sequence spans 395 residues: Elongation factor Tu (395 aa).

The tr-type G domain maps to 10–205 (KPHVNIGTIG…AVDSYIPMPE (196 aa)). Residues 19 to 26 (GHIDHGKT) form a G1 region. 19–26 (GHIDHGKT) serves as a coordination point for GTP. A Mg(2+)-binding site is contributed by T26. Residues 61 to 65 (GITIA) form a G2 region. The tract at residues 82-85 (DCPG) is G3. GTP is bound by residues 82 to 86 (DCPGH) and 137 to 140 (NKVD). The interval 137-140 (NKVD) is G4. The tract at residues 175–177 (SAL) is G5.

The protein belongs to the TRAFAC class translation factor GTPase superfamily. Classic translation factor GTPase family. EF-Tu/EF-1A subfamily. As to quaternary structure, monomer.

It is found in the cytoplasm. The catalysed reaction is GTP + H2O = GDP + phosphate + H(+). Functionally, GTP hydrolase that promotes the GTP-dependent binding of aminoacyl-tRNA to the A-site of ribosomes during protein biosynthesis. This Solibacter usitatus (strain Ellin6076) protein is Elongation factor Tu.